A 635-amino-acid polypeptide reads, in one-letter code: Putative adagio-like protein 2 (635 aa).

Acidic residues predominate over residues 1 to 25 (MEWDSDSEGSGDEEEEEEEEEEEGV). Residues 1–32 (MEWDSDSEGSGDEEEEEEEEEEEGVEVGGGGD) are disordered. The PAS domain maps to 44 to 123 (ALAIEGVLGA…TDIRRCLEEG (80 aa)). Cys-91 is subject to S-4a-FMN cysteine. One can recognise an F-box domain in the interval 209–255 (SDLFLLSDEVLCQKILSRLSPRDIASVNSVCKRLYHLTRNDDLWRMV). Kelch repeat units follow at residues 371–421 (RLVL…TLDG), 423–474 (KLVV…VYDG), 476–530 (KILM…PPPR), and 542–594 (RILI…VVGG).

This sequence belongs to the ADAGIO family. FMN binds covalently to cysteine after exposure to blue light and is reversed in the dark.

Its subcellular location is the nucleus. It functions in the pathway protein modification; protein ubiquitination. Its function is as follows. Component of an E3 ubiquitin ligase complex that plays a central role in blue light-dependent circadian cycles. Acts as a blue light photoreceptor, due to the presence of FMN, that mediates light-regulated protein degradation of critical clock components by targeting them to the proteasome complex. The polypeptide is Putative adagio-like protein 2 (Oryza sativa subsp. japonica (Rice)).